The following is a 659-amino-acid chain: Pollen receptor-like kinase 6 (659 aa).

Positions methionine 1 to glutamine 26 are cleaved as a signal peptide. At tyrosine 27–alanine 266 the chain is on the extracellular side. Residues cysteine 58 and cysteine 67 are joined by a disulfide bond. 5 LRR repeats span residues leucine 95 to leucine 118, glycine 120 to aspartate 142, methionine 143 to leucine 167, proline 168 to serine 190, and lysine 192 to aspartate 214. A glycan (N-linked (GlcNAc...) asparagine) is linked at asparagine 128. The N-linked (GlcNAc...) asparagine glycan is linked to asparagine 179. A glycan (N-linked (GlcNAc...) asparagine) is linked at asparagine 221. Residues glutamate 226–leucine 242 are LURE peptides binding. A disulfide bridge connects residues cysteine 229 and cysteine 237. The interval glutamate 241–glutamate 260 is disordered. A helical transmembrane segment spans residues isoleucine 267–isoleucine 287. The Cytoplasmic portion of the chain corresponds to lysine 288–threonine 659. A disordered region spans residues valine 312–glycine 354. A compositionally biased stretch (basic and acidic residues) spans arginine 324–threonine 341. One can recognise a Protein kinase domain in the interval lysine 384–threonine 659. ATP-binding positions include leucine 390 to alanine 398 and lysine 412. Serine 464 bears the Phosphoserine mark. Phosphothreonine occurs at positions 484 and 557. Serine 561 carries the post-translational modification Phosphoserine.

The protein belongs to the protein kinase superfamily. Ser/Thr protein kinase family. In terms of assembly, interacts with ROPGEF8, ROPGEF9, ROPGEF12, ROPGEF13, PRK3, LIP1 and LIP2. Binds to LURE peptides via its LRR repeats; interacts with LURE1.1, LURE1.2, LURE1.3 and LURE1.4. As to expression, expressed specifically in the pollen tube, predominantly at the tip.

Its subcellular location is the cell membrane. It is found in the cytoplasmic granule. In terms of biological role, key receptor for sensing species-specific attractants in cooperation with other pollen receptor-like kinases. Essential for pollen tube reorientation toward attractant peptides. The sequence is that of Pollen receptor-like kinase 6 from Arabidopsis thaliana (Mouse-ear cress).